Here is a 1109-residue protein sequence, read N- to C-terminus: Ankyrin repeat- and BTB/POZ domain-containing protein 3 (1109 aa).

A helical membrane pass occupies residues 168 to 188 (IVLSWGLAAHCTAAALAALSL). Residues 260 to 302 (SCSGPGPGSSSGSGPGPGSGPGAPAADKERETPGGGAASGGPC) form a disordered region. Positions 264–280 (PGPGSSSGSGPGPGSGP) are enriched in gly residues. ANK repeat units lie at residues 608–637 (QGMT…DLNV), 654–683 (RHWT…KVEG), 692–721 (YSET…DPLI), 735–764 (GDMN…KEKS), and 830–859 (TWLE…TIQE). The 67-residue stretch at 928 to 994 (SDVTFLVEGR…LYYGGPESLL (67 aa)) folds into the BTB domain.

It localises to the membrane. The protein is Ankyrin repeat- and BTB/POZ domain-containing protein 3 (Abtb3) of Mus musculus (Mouse).